The primary structure comprises 31 residues: Photosystem II reaction center protein T (31 aa).

The helical transmembrane segment at 3-23 (SVAYIIVLAMALSVLFFAIAF) threads the bilayer.

This sequence belongs to the PsbT family. PSII is composed of 1 copy each of membrane proteins PsbA, PsbB, PsbC, PsbD, PsbE, PsbF, PsbH, PsbI, PsbJ, PsbK, PsbL, PsbM, PsbT, PsbX, PsbY, PsbZ, Psb30/Ycf12, peripheral proteins PsbO, CyanoQ (PsbQ), PsbU, PsbV and a large number of cofactors. It forms dimeric complexes.

It localises to the cellular thylakoid membrane. Its function is as follows. Found at the monomer-monomer interface of the photosystem II (PS II) dimer, plays a role in assembly and dimerization of PSII. PSII is a light-driven water plastoquinone oxidoreductase, using light energy to abstract electrons from H(2)O, generating a proton gradient subsequently used for ATP formation. The chain is Photosystem II reaction center protein T from Picosynechococcus sp. (strain ATCC 27264 / PCC 7002 / PR-6) (Agmenellum quadruplicatum).